The sequence spans 292 residues: Protein/nucleic acid deglycase HchA (292 aa).

Residues 1 to 12 (MSQDVNELSKQP) are compositionally biased toward polar residues. The tract at residues 1–23 (MSQDVNELSKQPTPDKAEDNAFF) is disordered. C190 acts as the Nucleophile in catalysis.

It belongs to the peptidase C56 family. HchA subfamily.

The protein resides in the cytoplasm. It carries out the reaction N(omega)-(1-hydroxy-2-oxopropyl)-L-arginyl-[protein] + H2O = lactate + L-arginyl-[protein] + H(+). It catalyses the reaction N(6)-(1-hydroxy-2-oxopropyl)-L-lysyl-[protein] + H2O = lactate + L-lysyl-[protein] + H(+). The enzyme catalyses S-(1-hydroxy-2-oxopropyl)-L-cysteinyl-[protein] + H2O = lactate + L-cysteinyl-[protein] + H(+). The catalysed reaction is N(omega)-(1-hydroxy-2-oxoethyl)-L-arginyl-[protein] + H2O = L-arginyl-[protein] + glycolate + H(+). It carries out the reaction N(6)-(1-hydroxy-2-oxoethyl)-L-lysyl-[protein] + H2O = glycolate + L-lysyl-[protein] + H(+). It catalyses the reaction S-(1-hydroxy-2-oxoethyl)-L-cysteinyl-[protein] + H2O = glycolate + L-cysteinyl-[protein] + H(+). The enzyme catalyses N(2)-(1-hydroxy-2-oxopropyl)-dGTP + H2O = lactate + dGTP + H(+). The catalysed reaction is N(2)-(1-hydroxy-2-oxopropyl)-GTP + H2O = lactate + GTP + H(+). It carries out the reaction N(2)-(1-hydroxy-2-oxopropyl)-GDP + H2O = lactate + GDP + H(+). It catalyses the reaction N(2)-(1-hydroxy-2-oxopropyl)-GMP + H2O = lactate + GMP + H(+). The enzyme catalyses N(2)-(1-hydroxy-2-oxoethyl)-dGTP + H2O = dGTP + glycolate + H(+). The catalysed reaction is N(2)-(1-hydroxy-2-oxoethyl)-GTP + H2O = glycolate + GTP + H(+). It carries out the reaction N(2)-(1-hydroxy-2-oxoethyl)-GDP + H2O = glycolate + GDP + H(+). It catalyses the reaction N(2)-(1-hydroxy-2-oxoethyl)-GMP + H2O = glycolate + GMP + H(+). The enzyme catalyses an N(2)-(1-hydroxy-2-oxopropyl)-guanosine in RNA + H2O = a guanosine in RNA + lactate + H(+). The catalysed reaction is an N(2)-(1-hydroxy-2-oxopropyl)-2'-deoxyguanosine in DNA + H2O = a 2'-deoxyguanosine in DNA + lactate + H(+). It carries out the reaction an N(2)-(1-hydroxy-2-oxoethyl)-guanosine in RNA + H2O = a guanosine in RNA + glycolate + H(+). It catalyses the reaction an N(2)-(1-hydroxy-2-oxoethyl)-2'-deoxyguanosine in DNA + H2O = a 2'-deoxyguanosine in DNA + glycolate + H(+). Its function is as follows. Protein and nucleotide deglycase that catalyzes the deglycation of the Maillard adducts formed between amino groups of proteins or nucleotides and reactive carbonyl groups of glyoxals. Thus, functions as a protein deglycase that repairs methylglyoxal- and glyoxal-glycated proteins, and releases repaired proteins and lactate or glycolate, respectively. Deglycates cysteine, arginine and lysine residues in proteins, and thus reactivates these proteins by reversing glycation by glyoxals. Acts on early glycation intermediates (hemithioacetals and aminocarbinols), preventing the formation of Schiff bases and advanced glycation endproducts (AGE). Also functions as a nucleotide deglycase able to repair glycated guanine in the free nucleotide pool (GTP, GDP, GMP, dGTP) and in DNA and RNA. Is thus involved in a major nucleotide repair system named guanine glycation repair (GG repair), dedicated to reversing methylglyoxal and glyoxal damage via nucleotide sanitization and direct nucleic acid repair. Plays an important role in protecting cells from carbonyl stress. The sequence is that of Protein/nucleic acid deglycase HchA from Staphylococcus aureus (strain MSSA476).